We begin with the raw amino-acid sequence, 579 residues long: MFS-type transporter sphD (579 aa).

The interval Ser17–Arg62 is disordered. A compositionally biased stretch (basic and acidic residues) spans Pro51–Arg62. 8 consecutive transmembrane segments (helical) span residues Ala73–Ile93, Phe110–Ile130, Pro138–Gln158, Val168–Met188, Leu200–Ala220, Trp227–Leu247, Trp267–Ala287, and Gly294–Phe314. Asn335 is a glycosylation site (N-linked (GlcNAc...) asparagine). Helical transmembrane passes span Leu338–Ile358, Ala367–Leu391, Tyr398–Phe419, Leu429–Met449, Gly460–Ile480, and Phe541–Phe561.

Belongs to the major facilitator superfamily.

It localises to the membrane. Its function is as follows. MFS-type transporter; part of the gene cluster that mediates the biosynthesis of sphingofungins, bioactive molecules acting as sphingolipid inhibitors via inhibiting serine palmitoyl transferase (SPT). In Aspergillus fumigatus (strain CBS 144.89 / FGSC A1163 / CEA10) (Neosartorya fumigata), this protein is MFS-type transporter sphD.